Reading from the N-terminus, the 546-residue chain is Chaperonin GroEL (546 aa).

ATP is bound by residues 29–32, lysine 50, 86–90, glycine 414, 477–479, and aspartate 493; these read TLGP, DGTTT, and NAL.

It belongs to the chaperonin (HSP60) family. In terms of assembly, forms a cylinder of 14 subunits composed of two heptameric rings stacked back-to-back. Interacts with the co-chaperonin GroES.

It is found in the cytoplasm. The catalysed reaction is ATP + H2O + a folded polypeptide = ADP + phosphate + an unfolded polypeptide.. Its function is as follows. Together with its co-chaperonin GroES, plays an essential role in assisting protein folding. The GroEL-GroES system forms a nano-cage that allows encapsulation of the non-native substrate proteins and provides a physical environment optimized to promote and accelerate protein folding. This chain is Chaperonin GroEL, found in Leptospira interrogans serogroup Icterohaemorrhagiae serovar Lai (strain 56601).